A 494-amino-acid chain; its full sequence is Amidophosphoribosyltransferase (494 aa).

Positions 1–10 (MFNYSGLNEE) are excised as a propeptide. The active-site Nucleophile is the Cys-11. In terms of domain architecture, Glutamine amidotransferase type-2 spans 11–231 (CGVFGIWNHP…AGEYVVINDK (221 aa)). Residues Ser-294, Asp-356, and Asp-357 each contribute to the Mg(2+) site.

This sequence in the C-terminal section; belongs to the purine/pyrimidine phosphoribosyltransferase family. Requires Mg(2+) as cofactor.

It catalyses the reaction 5-phospho-beta-D-ribosylamine + L-glutamate + diphosphate = 5-phospho-alpha-D-ribose 1-diphosphate + L-glutamine + H2O. It participates in purine metabolism; IMP biosynthesis via de novo pathway; N(1)-(5-phospho-D-ribosyl)glycinamide from 5-phospho-alpha-D-ribose 1-diphosphate: step 1/2. Its function is as follows. Catalyzes the formation of phosphoribosylamine from phosphoribosylpyrophosphate (PRPP) and glutamine. This Staphylococcus aureus (strain MRSA252) protein is Amidophosphoribosyltransferase.